Here is a 517-residue protein sequence, read N- to C-terminus: Methylmalonyl-CoA decarboxylase subunit alpha (517 aa).

Positions Ala-4 to Gly-260 constitute a CoA carboxyltransferase N-terminal domain. Residues Glu-271–Gly-513 form the CoA carboxyltransferase C-terminal domain.

It belongs to the AccD/PCCB family. The methylmalonyl-CoA decarboxylase is composed of four subunits: the carboxyltransferase alpha subunit (MmdA), the tunnel beta subunit (MmdB), the biotin-containing gamma subunit (MmdC) and the delta subunit (MmdD).

Its subcellular location is the cell membrane. It catalyses the reaction (S)-methylmalonyl-CoA + Na(+)(in) + H(+)(out) = propanoyl-CoA + Na(+)(out) + CO2. Carboxyltransferase subunit of the sodium ion pump methylmalonyl-CoA decarboxylase, which converts the chemical energy of a decarboxylation reaction into an electrochemical gradient of Na(+) ions across the cytoplasmic membrane, thereby creating a sodium ion motive force that is used for ATP synthesis. The alpha subunit catalyzes the Na(+)-independent carboxyltransfer from methylmalonyl-CoA to the prosthetic biotin group located on the gamma subunit. The sequence is that of Methylmalonyl-CoA decarboxylase subunit alpha from Propionigenium modestum.